Here is a 262-residue protein sequence, read N- to C-terminus: Thiazole synthase (262 aa).

Residue Lys97 is the Schiff-base intermediate with DXP of the active site. Residues Gly158, 185–186 (AG), and 207–208 (NT) contribute to the 1-deoxy-D-xylulose 5-phosphate site. Residues 243 to 262 (DKAQASTPTVGQPFWHSAEY) are disordered.

This sequence belongs to the ThiG family. As to quaternary structure, homotetramer. Forms heterodimers with either ThiH or ThiS.

It is found in the cytoplasm. The catalysed reaction is [ThiS sulfur-carrier protein]-C-terminal-Gly-aminoethanethioate + 2-iminoacetate + 1-deoxy-D-xylulose 5-phosphate = [ThiS sulfur-carrier protein]-C-terminal Gly-Gly + 2-[(2R,5Z)-2-carboxy-4-methylthiazol-5(2H)-ylidene]ethyl phosphate + 2 H2O + H(+). It participates in cofactor biosynthesis; thiamine diphosphate biosynthesis. Functionally, catalyzes the rearrangement of 1-deoxy-D-xylulose 5-phosphate (DXP) to produce the thiazole phosphate moiety of thiamine. Sulfur is provided by the thiocarboxylate moiety of the carrier protein ThiS. In vitro, sulfur can be provided by H(2)S. The chain is Thiazole synthase from Neisseria meningitidis serogroup A / serotype 4A (strain DSM 15465 / Z2491).